Consider the following 455-residue polypeptide: Catalase-like protein (455 aa).

The disordered stretch occupies residues 1-25; sequence MSQQDKKLTGVFGHPVSDRENSMTA.

This sequence belongs to the catalase family.

Its function is as follows. Catalytically inactive. This chain is Catalase-like protein (katB), found in Staphylococcus aureus.